Consider the following 320-residue polypeptide: ATP-dependent 6-phosphofructokinase (320 aa).

Residues G12, 73–74 (RF), and 103–106 (GDGS) contribute to the ATP site. D104 is a binding site for Mg(2+). Residue 126 to 128 (TID) participates in substrate binding. The Proton acceptor role is filled by D128. R155 contributes to the ADP binding site. Residues R163 and 170–172 (MGR) contribute to the substrate site. ADP is bound by residues 186 to 188 (GCE) and K212. Substrate is bound by residues E223, R244, and 250–253 (HIQR).

It belongs to the phosphofructokinase type A (PFKA) family. ATP-dependent PFK group I subfamily. Prokaryotic clade 'B1' sub-subfamily. In terms of assembly, homotetramer. The cofactor is Mg(2+).

It localises to the cytoplasm. The catalysed reaction is beta-D-fructose 6-phosphate + ATP = beta-D-fructose 1,6-bisphosphate + ADP + H(+). Its pathway is carbohydrate degradation; glycolysis; D-glyceraldehyde 3-phosphate and glycerone phosphate from D-glucose: step 3/4. Its activity is regulated as follows. Allosterically activated by ADP and other diphosphonucleosides, and allosterically inhibited by phosphoenolpyruvate. Functionally, catalyzes the phosphorylation of D-fructose 6-phosphate to fructose 1,6-bisphosphate by ATP, the first committing step of glycolysis. This Buchnera aphidicola subsp. Cinara cedri (strain Cc) protein is ATP-dependent 6-phosphofructokinase.